The following is a 310-amino-acid chain: Olfactory receptor 4C16 (310 aa).

Topologically, residues 1–23 (MQLNNNVTEFILLGLTQDPFWKK) are extracellular. The N-linked (GlcNAc...) asparagine glycan is linked to asparagine 6. The chain crosses the membrane as a helical span at residues 24 to 47 (IVFVIFLRLYLGTLLGNLLIIISV). Over 48–55 (KTSQALKN) the chain is Cytoplasmic. A helical transmembrane segment spans residues 56-77 (PMFFFLFYLSLSDTCLSTSITP). The Extracellular portion of the chain corresponds to 78–98 (RMIVDALLKKTTISFSECMIQ). The cysteines at positions 95 and 187 are disulfide-linked. The helical transmembrane segment at 99 to 118 (VFSSHVFGCLEIFILILTAV) threads the bilayer. Over 119 to 137 (DRYVDICKPLHYMTIISQW) the chain is Cytoplasmic. The chain crosses the membrane as a helical span at residues 138–156 (VCGVLMAVAWVGSCVHSLV). Residues 157–193 (QIFLALSLPFCGPNVINHCFCDLQPLLKQACSETYVV) lie on the Extracellular side of the membrane. A helical membrane pass occupies residues 194 to 217 (NLLLVSNSGAICAVSYVMLIFSYV). At 218–233 (IFLHSLRNHSAEVIKK) the chain is on the cytoplasmic side. Residues 234–256 (ALSTCVSHIIVVILFFGPCIFMY) form a helical membrane-spanning segment. Topologically, residues 257–267 (TCLATVFPMDK) are extracellular. The helical transmembrane segment at 268-287 (MIAVFYTVGTSFLNPVIYTL) threads the bilayer. Topologically, residues 288-310 (KNTEVKSAMRKLWSKKLITDDKR) are cytoplasmic.

This sequence belongs to the G-protein coupled receptor 1 family.

It is found in the cell membrane. Its function is as follows. Odorant receptor. The protein is Olfactory receptor 4C16 (OR4C16) of Homo sapiens (Human).